The following is an 808-amino-acid chain: LisH domain-containing protein ARMC9 (808 aa).

Positions 7 to 39 (YEADLLGLVKEFLNFGEFQETLETFTKECKTKG) constitute a LisH domain. The stretch at 196 to 230 (ITLYKESLHNNQELLQQLQQQLMETEHKARTYKKC) forms a coiled coil. Disordered regions lie at residues 576 to 599 (FDESIESDDEEEEKDDEEDEDALE), 650 to 709 (PLQR…DYCV), and 742 to 808 (GMEK…SYRK). Residues 579–599 (SIESDDEEEEKDDEEDEDALE) are compositionally biased toward acidic residues. 3 stretches are compositionally biased toward polar residues: residues 655 to 668 (VTPSTHRVMNTVRK), 677 to 709 (TNTFKTSQANMSVVSSRPPTRSGSRASTSDYCV), and 775 to 784 (IAPQFSQSGP). The segment covering 785 to 808 (QQTSYSSSAGSSTRSRQSTQSYRK) has biased composition (low complexity).

It is found in the cytoplasm. It localises to the cytoskeleton. The protein resides in the cilium basal body. The protein localises to the cell projection. Its subcellular location is the cilium. It is found in the microtubule organizing center. It localises to the centrosome. The protein resides in the centriole. Its function is as follows. Involved in ciliogenesis. It is required for appropriate acetylation and polyglutamylation of ciliary microtubules, and regulation of cilium length. Acts as a positive regulator of hedgehog (Hh)signaling. This is LisH domain-containing protein ARMC9 (armc9) from Xenopus tropicalis (Western clawed frog).